The primary structure comprises 277 residues: Putative phosphoenolpyruvate synthase regulatory protein (277 aa).

157–164 (GVSRSGKT) lines the ADP pocket.

Belongs to the pyruvate, phosphate/water dikinase regulatory protein family. PSRP subfamily.

The enzyme catalyses [pyruvate, water dikinase] + ADP = [pyruvate, water dikinase]-phosphate + AMP + H(+). It catalyses the reaction [pyruvate, water dikinase]-phosphate + phosphate + H(+) = [pyruvate, water dikinase] + diphosphate. In terms of biological role, bifunctional serine/threonine kinase and phosphorylase involved in the regulation of the phosphoenolpyruvate synthase (PEPS) by catalyzing its phosphorylation/dephosphorylation. The polypeptide is Putative phosphoenolpyruvate synthase regulatory protein (Vibrio vulnificus (strain CMCP6)).